Here is a 372-residue protein sequence, read N- to C-terminus: Glutamate 5-kinase (372 aa).

An ATP-binding site is contributed by K14. Residues S54, D141, and N153 each contribute to the substrate site. T173–D174 serves as a coordination point for ATP. The PUA domain occupies R280–M358.

The protein belongs to the glutamate 5-kinase family.

It is found in the cytoplasm. The enzyme catalyses L-glutamate + ATP = L-glutamyl 5-phosphate + ADP. Its pathway is amino-acid biosynthesis; L-proline biosynthesis; L-glutamate 5-semialdehyde from L-glutamate: step 1/2. Catalyzes the transfer of a phosphate group to glutamate to form L-glutamate 5-phosphate. In Burkholderia mallei (strain NCTC 10229), this protein is Glutamate 5-kinase.